The primary structure comprises 123 residues: MTTSSYFLLVALGLLLYVCQSSFGGEHVCWLDDPNHPEGICGPQVSDIVEIRCEEKEAEQGGANNARAYTGRTSSLMKRRGFLSLLKKRGKRDEGSLQRSGRGIVCECCKHHCTKEELTEYCH.

Positions 1 to 24 (MTTSSYFLLVALGLLLYVCQSSFG) are cleaved as a signal peptide. 4 disulfides stabilise this stretch: cysteine 29–cysteine 106, cysteine 41–cysteine 109, cysteine 53–cysteine 122, and cysteine 108–cysteine 113. Proline 34 is subject to 4-hydroxyproline; partial. A propeptide spans 59 to 102 (EQGGANNARAYTGRTSSLMKRRGFLSLLKKRGKRDEGSLQRSGR) (c peptide). Residue glutamate 107 is modified to 4-carboxyglutamate. Glutamate 117 carries the 4-carboxyglutamate; partial modification.

Belongs to the insulin family. Heterodimer of A and B chains; disulfide-linked. Expressed by the venom duct.

It is found in the secreted. This venom insulin facilitates prey capture by rapidly inducing hypoglycemic shock. Intraperitoneal injection of this peptide into zebrafish lowers blood glucose with the same potency than human insulin. In vivo, when applied to water, this peptide reduces overall locomotor activity of zebrafish larvae, observed as a significant decrease in the percentage of time spent swimming and movement frequency. The protein is Insulin-like peptide-1 of Conus victoriae (Queen Victoria cone).